We begin with the raw amino-acid sequence, 519 residues long: Spermidine/putrescine import ATP-binding protein PotA (519 aa).

Residues 6-401 enclose the ABC transporter domain; that stretch reads LHLRDITKIY…PNSLWVANFI (396 aa). 39–46 is a binding site for ATP; the sequence is GPSGCGKT. The tract at residues 107–270 is insert; it reads RKPKDNVDQS…EQFENKNITR (164 aa).

The protein belongs to the ABC transporter superfamily. Spermidine/putrescine importer (TC 3.A.1.11.1) family. The complex is composed of two ATP-binding proteins (PotA), two transmembrane proteins (PotB and PotC) and a solute-binding protein (PotD).

The protein localises to the cell membrane. The catalysed reaction is ATP + H2O + polyamine-[polyamine-binding protein]Side 1 = ADP + phosphate + polyamineSide 2 + [polyamine-binding protein]Side 1.. In terms of biological role, part of the ABC transporter complex PotABCD involved in spermidine/putrescine import. Responsible for energy coupling to the transport system. The protein is Spermidine/putrescine import ATP-binding protein PotA of Ureaplasma parvum serovar 3 (strain ATCC 700970).